A 428-amino-acid chain; its full sequence is Spliceosome RNA helicase DDX39B (428 aa).

Residues 1–19 (MAENDVDNELLDYEEDEVE) are compositionally biased toward acidic residues. Positions 1–35 (MAENDVDNELLDYEEDEVENAAGGDGSEAPPKKDV) are disordered. A Q motif motif is present at residues 45–73 (SGFRDFLLKPELLRAIVDCGFEHPSEVQH). One can recognise a Helicase ATP-binding domain in the interval 76 to 249 (IPQAILGMDV…RKFMQDPMEI (174 aa)). 89–96 (AKSGMGKT) serves as a coordination point for ATP. The DECD box signature appears at 196-199 (DECD). In terms of domain architecture, Helicase C-terminal spans 261-422 (GLQQYYVKLK…ELPDEIDISS (162 aa)).

Belongs to the DEAD box helicase family. DECD subfamily. Component of the transcription/export (TREX) complex at least composed of ALYREF/THOC4, DDX39B, SARNP/CIP29, CHTOP and the THO subcomplex.

The protein localises to the nucleus. Its subcellular location is the nucleus speckle. The enzyme catalyses ATP + H2O = ADP + phosphate + H(+). Its function is as follows. Involved in nuclear export of spliced and unspliced mRNA. Component of the TREX complex which is thought to couple mRNA transcription, processing and nuclear export, and specifically associates with spliced mRNA and not with unspliced pre-mRNA. The TREX complex is recruited to spliced mRNAs by a transcription-independent mechanism, binds to mRNA upstream of the exon-junction complex (EJC) and is recruited in a splicing- and cap-dependent manner to a region near the 5' end of the mRNA where it functions in mRNA export to the cytoplasm via the TAP/NXF1 pathway. Involved in transcription elongation and genome stability. Functionally, splice factor that is required for the first ATP-dependent step in spliceosome assembly and for the interaction of U2 snRNP with the branchpoint. Has both RNA-stimulated ATP binding/hydrolysis activity and ATP-dependent RNA unwinding activity. Even with the stimulation of RNA, the ATPase activity is weak. Can only hydrolyze ATP but not other NTPs. The RNA stimulation of ATPase activity does not have a strong preference for the sequence and length of the RNA. However, ssRNA stimulates the ATPase activity much more strongly than dsRNA. Can unwind 5' or 3' overhangs or blunt end RNA duplexes in vitro. The ATPase and helicase activities are not influenced by U2AF2; the effect of ALYREF/THOC4 is reported conflictingly. The chain is Spliceosome RNA helicase DDX39B (DDX39B) from Gallus gallus (Chicken).